A 398-amino-acid chain; its full sequence is S-adenosylmethionine synthase 2 (398 aa).

H16 provides a ligand contact to ATP. Residue D18 coordinates Mg(2+). E51 is a binding site for K(+). L-methionine contacts are provided by E64 and Q108. Residues 108-118 (QSADIAQGVDA) form a flexible loop region. Residues 176–178 (DSK), 242–243 (KF), D251, 257–258 (RK), A274, and K278 each bind ATP. Residue D251 participates in L-methionine binding. Position 282 (K282) interacts with L-methionine.

It belongs to the AdoMet synthase family. In terms of assembly, homotetramer; dimer of dimers. The cofactor is Mg(2+). Requires K(+) as cofactor.

Its subcellular location is the cytoplasm. It carries out the reaction L-methionine + ATP + H2O = S-adenosyl-L-methionine + phosphate + diphosphate. It participates in amino-acid biosynthesis; S-adenosyl-L-methionine biosynthesis; S-adenosyl-L-methionine from L-methionine: step 1/1. Functionally, catalyzes the formation of S-adenosylmethionine (AdoMet) from methionine and ATP. The overall synthetic reaction is composed of two sequential steps, AdoMet formation and the subsequent tripolyphosphate hydrolysis which occurs prior to release of AdoMet from the enzyme. The sequence is that of S-adenosylmethionine synthase 2 from Rhodopseudomonas palustris (strain BisB18).